A 434-amino-acid polypeptide reads, in one-letter code: Trigger factor (434 aa).

The PPIase FKBP-type domain occupies 160–245 (GDKVKMNFVG…LTEVQAAQLP (86 aa)).

Belongs to the FKBP-type PPIase family. Tig subfamily.

It is found in the cytoplasm. It catalyses the reaction [protein]-peptidylproline (omega=180) = [protein]-peptidylproline (omega=0). In terms of biological role, involved in protein export. Acts as a chaperone by maintaining the newly synthesized protein in an open conformation. Functions as a peptidyl-prolyl cis-trans isomerase. This chain is Trigger factor, found in Shewanella denitrificans (strain OS217 / ATCC BAA-1090 / DSM 15013).